A 130-amino-acid chain; its full sequence is Small ribosomal subunit protein uS11c (130 aa).

Belongs to the universal ribosomal protein uS11 family. In terms of assembly, part of the 30S ribosomal subunit.

The protein localises to the plastid. It localises to the chloroplast. The polypeptide is Small ribosomal subunit protein uS11c (Physcomitrium patens (Spreading-leaved earth moss)).